The primary structure comprises 238 residues: Flagellar L-ring protein (238 aa).

An N-terminal signal peptide occupies residues 1 to 17 (MIRKTLAASCAVLLMAG). A lipid anchor (N-palmitoyl cysteine) is attached at cysteine 18. The S-diacylglycerol cysteine moiety is linked to residue cysteine 18.

Belongs to the FlgH family. In terms of assembly, the basal body constitutes a major portion of the flagellar organelle and consists of four rings (L,P,S, and M) mounted on a central rod.

It is found in the cell outer membrane. It localises to the bacterial flagellum basal body. Assembles around the rod to form the L-ring and probably protects the motor/basal body from shearing forces during rotation. This chain is Flagellar L-ring protein, found in Nitratidesulfovibrio vulgaris (strain ATCC 29579 / DSM 644 / CCUG 34227 / NCIMB 8303 / VKM B-1760 / Hildenborough) (Desulfovibrio vulgaris).